Here is a 345-residue protein sequence, read N- to C-terminus: Serine proteinase inhibitor 2 (345 aa).

The protein belongs to the serpin family. Poxviruses subfamily.

It is found in the host cytoplasm. Functionally, viral serpin that inhibits both cysteine and serine proteinases involved in the regulation of host inflammatory and apoptosis processes. Major anti-apoptotic protein which inhibits both intrinsic and extrinsic pathways and strongly cleaves host CASP1 and CASP8 but is a rather poor inhibitor of host CASP3. Prevents the proteolytic activity of host interleukin-1-beta converting enzyme (ICE) and ICE-like enzymes. Can also block apoptosis through host tumor necrosis factor (TNF) receptor. The inhibition of host ICE is an example of a 'cross-class' interaction, in which a serpin inhibits a non-serine proteinase. Also inhibits granzyme B. In Vaccinia virus (strain Western Reserve) (VACV), this protein is Serine proteinase inhibitor 2 (OPG199).